The primary structure comprises 223 residues: uncharacterized protein (223 aa).

The interval 1-30 (MASATVRNVPLLDDDTIPFGEEDEMRDPSR) is disordered. Residues 12–25 (LDDDTIPFGEEDEM) are compositionally biased toward acidic residues. 4 consecutive transmembrane segments (helical) span residues 35-55 (YTHPYVTFFHLFFRGAAILIY), 56-76 (MFCGWFSDSFITSFVFVVLFL), 129-149 (IFWLGLILCPVFWGLFFLFAL), and 154-174 (FKWLLLVMIAIALNAANLYGY).

Belongs to the TVP23 family.

The protein localises to the membrane. This is an uncharacterized protein from Drosophila melanogaster (Fruit fly).